A 304-amino-acid chain; its full sequence is N-acetyl-D-glucosamine kinase (304 aa).

Residues 4 to 11 and 133 to 140 each bind ATP; these read GLDIGGTK and GFGGGFVL. Residues H157, C178, C180, and C185 each coordinate Zn(2+).

This sequence belongs to the ROK (NagC/XylR) family. NagK subfamily.

It catalyses the reaction N-acetyl-D-glucosamine + ATP = N-acetyl-D-glucosamine 6-phosphate + ADP + H(+). The protein operates within cell wall biogenesis; peptidoglycan recycling. Its function is as follows. Catalyzes the phosphorylation of N-acetyl-D-glucosamine (GlcNAc) derived from cell-wall degradation, yielding GlcNAc-6-P. This chain is N-acetyl-D-glucosamine kinase, found in Haemophilus influenzae (strain 86-028NP).